The sequence spans 66 residues: Large ribosomal subunit protein bL35 (66 aa).

Positions 1-16 (MPKQKTHRASAKRFKR) are enriched in basic residues. The interval 1–21 (MPKQKTHRASAKRFKRTGSGG) is disordered.

The protein belongs to the bacterial ribosomal protein bL35 family.

The polypeptide is Large ribosomal subunit protein bL35 (Streptococcus mutans serotype c (strain ATCC 700610 / UA159)).